The chain runs to 565 residues: Ubiquitin carboxyl-terminal hydrolase 21 (565 aa).

The segment covering methionine 1–glutamate 14 has biased composition (basic and acidic residues). The segment at methionine 1–proline 103 is disordered. A compositionally biased stretch (pro residues) spans methionine 48 to glycine 57. A compositionally biased stretch (basic and acidic residues) spans leucine 58–arginine 70. Residues glutamate 134–arginine 152 carry the Nuclear export signal motif. A USP domain is found at valine 212 to methionine 558. Cysteine 221 functions as the Nucleophile in the catalytic mechanism. Positions 384, 387, 437, and 440 each coordinate Zn(2+). Catalysis depends on histidine 518, which acts as the Proton acceptor.

Belongs to the peptidase C19 family. USP21 subfamily. Interacts with BEND3. In terms of tissue distribution, highly expressed in heart, pancreas and skeletal muscle. Also expressed in brain, placenta, liver and kidney, and at very low level in lung.

The protein localises to the cytoplasm. Its subcellular location is the nucleus. It carries out the reaction Thiol-dependent hydrolysis of ester, thioester, amide, peptide and isopeptide bonds formed by the C-terminal Gly of ubiquitin (a 76-residue protein attached to proteins as an intracellular targeting signal).. Deubiquitinates histone H2A, a specific tag for epigenetic transcriptional repression, thereby acting as a coactivator. Deubiquitination of histone H2A releaves the repression of di- and trimethylation of histone H3 at 'Lys-4', resulting in regulation of transcriptional initiation. Regulates gene expression via histone H2A deubiquitination. Deubiquitinates BAZ2A/TIP5 leading to its stabilization. Also capable of removing NEDD8 from NEDD8 conjugates but has no effect on Sentrin-1 conjugates. Also acts as a negative regulator of the ribosome quality control (RQC) by mediating deubiquitination of 40S ribosomal proteins RPS10/eS10 and RPS20/uS10, thereby antagonizing ZNF598-mediated 40S ubiquitination. In Homo sapiens (Human), this protein is Ubiquitin carboxyl-terminal hydrolase 21.